The sequence spans 144 residues: D-aminoacyl-tRNA deacylase (144 aa).

The Gly-cisPro motif, important for rejection of L-amino acids signature appears at 136–137 (GP).

The protein belongs to the DTD family. As to quaternary structure, homodimer.

The protein resides in the cytoplasm. It catalyses the reaction glycyl-tRNA(Ala) + H2O = tRNA(Ala) + glycine + H(+). It carries out the reaction a D-aminoacyl-tRNA + H2O = a tRNA + a D-alpha-amino acid + H(+). In terms of biological role, an aminoacyl-tRNA editing enzyme that deacylates mischarged D-aminoacyl-tRNAs. Also deacylates mischarged glycyl-tRNA(Ala), protecting cells against glycine mischarging by AlaRS. Acts via tRNA-based rather than protein-based catalysis; rejects L-amino acids rather than detecting D-amino acids in the active site. By recycling D-aminoacyl-tRNA to D-amino acids and free tRNA molecules, this enzyme counteracts the toxicity associated with the formation of D-aminoacyl-tRNA entities in vivo and helps enforce protein L-homochirality. In Corynebacterium glutamicum (strain R), this protein is D-aminoacyl-tRNA deacylase.